The primary structure comprises 328 residues: tRNA uridine(34) hydroxylase (328 aa).

A Rhodanese domain is found at 122-218; that stretch reads QENRCLVLDV…YGLKMGTGKW (97 aa). Cys-178 acts as the Cysteine persulfide intermediate in catalysis.

It belongs to the TrhO family.

The catalysed reaction is uridine(34) in tRNA + AH2 + O2 = 5-hydroxyuridine(34) in tRNA + A + H2O. Functionally, catalyzes oxygen-dependent 5-hydroxyuridine (ho5U) modification at position 34 in tRNAs. The sequence is that of tRNA uridine(34) hydroxylase from Chlamydia muridarum (strain MoPn / Nigg).